Here is a 387-residue protein sequence, read N- to C-terminus: Putative odorant receptor 19b (387 aa).

Over 1–40 the chain is Cytoplasmic; the sequence is MDISKVDSTRALVNHWRIFRIMGIHPPGKRTFWGRHYTAY. Residues 41–61 form a helical membrane-spanning segment; the sequence is SMVWNVTFHICIWVSFSVNLL. Over 62 to 71 the chain is Extracellular; sequence QSNSLETFCE. Residues 72 to 92 traverse the membrane as a helical segment; it reads SLCVTMPHTLYMLKLINVRRM. Topologically, residues 93 to 127 are cytoplasmic; that stretch reads RGEMISSHWLLRLLDKRLGCADERQIIMAGIERAE. Residues 128-148 traverse the membrane as a helical segment; that stretch reads FIFRTIFRGLACTVVLGIIYI. Over 149-171 the chain is Extracellular; the sequence is SASSEPTLMYPTWIPWNWKDSTS. The chain crosses the membrane as a helical span at residues 172-192; the sequence is AYLATAMLHTTALMANATLVL. Topologically, residues 193 to 254 are cytoplasmic; sequence NLSSYPGTYL…LRLFKSLERS (62 aa). The helical transmembrane segment at 255 to 275 threads the bilayer; the sequence is LSMTCFLQFFSTACAQCTICY. Residues 276-285 are Extracellular-facing; sequence FLLFGNVGIM. Residues 286–306 form a helical membrane-spanning segment; the sequence is RFMNMLFLLVILTTETLLLCY. The Cytoplasmic portion of the chain corresponds to 307–336; the sequence is TAELPCKEGESLLTAVYSCNWLSQSVNFRR. A helical membrane pass occupies residues 337 to 357; it reads LLLLMLARCQIPMILVSGVIV. At 358-387 the chain is on the extracellular side; it reads PISMKTFTVMIKGAYTMLTLLNEIRKTSLE.

Belongs to the insect chemoreceptor superfamily. Heteromeric odorant receptor channel (TC 1.A.69) family. Or2a subfamily. Interacts with Orco. Complexes exist early in the endomembrane system in olfactory sensory neurons (OSNs), coupling these complexes to the conserved ciliary trafficking pathway.

The protein localises to the cell membrane. Functionally, odorant receptor which mediates acceptance or avoidance behavior, depending on its substrates. The odorant receptor repertoire encodes a large collection of odor stimuli that vary widely in identity, intensity, and duration. May form a complex with Orco to form odorant-sensing units, providing sensitive and prolonged odorant signaling and calcium permeability. In Drosophila melanogaster (Fruit fly), this protein is Putative odorant receptor 19b.